The sequence spans 149 residues: Ribonuclease pancreatic (149 aa).

The first 25 residues, 1-25 (MGLEKSFILFPLLILVLGWVQSSLG), serve as a signal peptide directing secretion. 2 residues coordinate substrate: K32 and R35. H37 functions as the Proton acceptor in the catalytic mechanism. Cystine bridges form between C51–C109, C65–C120, C83–C135, and C90–C97. N-linked (GlcNAc...) asparagine glycosylation occurs at N59. 66-70 (KPVNT) provides a ligand contact to substrate. N-linked (GlcNAc...) asparagine glycosylation occurs at N87. The substrate site is built by K91 and R110. H144 serves as the catalytic Proton donor.

This sequence belongs to the pancreatic ribonuclease family. In terms of assembly, monomer. Interacts with and forms tight 1:1 complexes with RNH1. Dimerization of two such complexes may occur. Interaction with RNH1 inhibits this protein. In terms of tissue distribution, pancreas.

The protein resides in the secreted. It carries out the reaction an [RNA] containing cytidine + H2O = an [RNA]-3'-cytidine-3'-phosphate + a 5'-hydroxy-ribonucleotide-3'-[RNA].. The catalysed reaction is an [RNA] containing uridine + H2O = an [RNA]-3'-uridine-3'-phosphate + a 5'-hydroxy-ribonucleotide-3'-[RNA].. Functionally, endonuclease that catalyzes the cleavage of RNA on the 3' side of pyrimidine nucleotides. Acts on single-stranded and double-stranded RNA. In Abrothrix jelskii (Jelski's altiplano mouse), this protein is Ribonuclease pancreatic (RNASE1).